The primary structure comprises 131 residues: Proteinase inhibitor (131 aa).

A signal peptide spans 1–26 (MSASAKLSRMVCLLCGFFSTGISMAS). Cys-51 and Cys-74 are joined by a disulfide.

It belongs to the protease inhibitor I38 family.

Its subcellular location is the periplasm. Functionally, inhibitor of the alkaline protease. It forms a non-covalent bond with the protease and may prevent its autocatalytic cleavage in the periplasm. In Pseudomonas aeruginosa (strain ATCC 15692 / DSM 22644 / CIP 104116 / JCM 14847 / LMG 12228 / 1C / PRS 101 / PAO1), this protein is Proteinase inhibitor (inh).